The sequence spans 443 residues: Glucose-6-phosphate isomerase (443 aa).

The active-site Proton donor is the E285. Catalysis depends on residues H306 and K420.

It belongs to the GPI family.

It is found in the cytoplasm. The enzyme catalyses alpha-D-glucose 6-phosphate = beta-D-fructose 6-phosphate. The protein operates within carbohydrate biosynthesis; gluconeogenesis. It participates in carbohydrate degradation; glycolysis; D-glyceraldehyde 3-phosphate and glycerone phosphate from D-glucose: step 2/4. Catalyzes the reversible isomerization of glucose-6-phosphate to fructose-6-phosphate. The sequence is that of Glucose-6-phosphate isomerase from Staphylococcus aureus (strain NCTC 8325 / PS 47).